The primary structure comprises 182 residues: MMYRYVKDAWKNPKDSYVRELMWERAPKWRRDPVIKRIERPTRIDRARALGYRAKPGYIVVRTRVRRGSQRKTRFKAGRRPTRMGVKKITTAKSIKRIAEERVARKYPNMEVLNSYWVWEDGKYKFYEVILVDPNHLAIKNDPKIYWICVKQHRGRVFRGLISEGKKNRGLRNRGKGAEKVR.

This sequence belongs to the eukaryotic ribosomal protein eL15 family.

The polypeptide is Large ribosomal subunit protein eL15 (rpl15e) (Methanothermobacter thermautotrophicus (strain ATCC 29096 / DSM 1053 / JCM 10044 / NBRC 100330 / Delta H) (Methanobacterium thermoautotrophicum)).